The chain runs to 28 residues: Putative GDSL-motif lipase/hydrolase-like protein (28 aa).

This sequence belongs to the 'GDSL' lipolytic enzyme family.

This is Putative GDSL-motif lipase/hydrolase-like protein from Populus euphratica (Euphrates poplar).